The sequence spans 199 residues: Extracellular superoxide dismutase [Cu-Zn] (199 aa).

The signal sequence occupies residues 1–20 (MMIASFAIFLSHIIFITYAT). Residues Asn33, Asn60, and Asn70 are each glycosylated (N-linked (GlcNAc...) asparagine). Positions 89, 91, and 106 each coordinate Cu cation. A disulfide bond links Cys100 and Cys192. A Zn(2+)-binding site is contributed by His106. An N-linked (GlcNAc...) asparagine glycan is attached at Asn111. The Zn(2+) site is built by His114, His123, and Asp126. Residue His163 participates in Cu cation binding.

This sequence belongs to the Cu-Zn superoxide dismutase family. In terms of assembly, homodimer. Cu cation serves as cofactor. The cofactor is Zn(2+).

The protein resides in the secreted. The protein localises to the extracellular space. The enzyme catalyses 2 superoxide + 2 H(+) = H2O2 + O2. Functionally, protect the extracellular space from toxic effect of reactive oxygen intermediates by converting superoxide radicals into hydrogen peroxide and oxygen. May act in the parasite defense by neutralizing superoxide generated by activated leukocytes, thus acting as both an antioxidant and an anti-inflammatory factor. The polypeptide is Extracellular superoxide dismutase [Cu-Zn] (Brugia pahangi (Filarial nematode worm)).